Here is a 267-residue protein sequence, read N- to C-terminus: Myxobacterial hemagglutinin (267 aa).

4 tandem repeats follow at residues 1–66, 67–133, 134–200, and 201–267. The segment at 1–267 is 4 X 65 AA tandem repeats; that stretch reads MAAYLVQNQW…GPIGFRARLG (267 aa).

Belongs to the bacterial lectin family.

This lectin might have a role in the differentiation of cells. This Myxococcus xanthus protein is Myxobacterial hemagglutinin (mbhA).